Reading from the N-terminus, the 306-residue chain is Pyridoxal 5'-phosphate synthase subunit SNZERR (306 aa).

Residue Asp-34 participates in D-ribose 5-phosphate binding. The active-site Schiff-base intermediate with D-ribose 5-phosphate is the Lys-91. D-ribose 5-phosphate is bound at residue Gly-163. Arg-175 contacts D-glyceraldehyde 3-phosphate. D-ribose 5-phosphate contacts are provided by residues Gly-224 and 245–246 (GS).

The protein belongs to the PdxS/SNZ family.

It carries out the reaction aldehydo-D-ribose 5-phosphate + D-glyceraldehyde 3-phosphate + L-glutamine = pyridoxal 5'-phosphate + L-glutamate + phosphate + 3 H2O + H(+). Its pathway is cofactor biosynthesis; pyridoxal 5'-phosphate biosynthesis. Catalyzes the formation of pyridoxal 5'-phosphate from ribose 5-phosphate (RBP), glyceraldehyde 3-phosphate (G3P) and ammonia. The ammonia is provided by PDX2. Can also use ribulose 5-phosphate and dihydroxyacetone phosphate as substrates, resulting from enzyme-catalyzed isomerization of RBP and G3P, respectively. Also plays an indirect role in resistance to singlet oxygen-generating photosensitizers. The polypeptide is Pyridoxal 5'-phosphate synthase subunit SNZERR (SNZERR) (Suberites domuncula (Sponge)).